The chain runs to 176 residues: ATP-dependent protease subunit HslV (176 aa).

Thr2 is a catalytic residue. Positions 157, 160, and 163 each coordinate Na(+).

This sequence belongs to the peptidase T1B family. HslV subfamily. As to quaternary structure, a double ring-shaped homohexamer of HslV is capped on each side by a ring-shaped HslU homohexamer. The assembly of the HslU/HslV complex is dependent on binding of ATP.

The protein resides in the cytoplasm. The catalysed reaction is ATP-dependent cleavage of peptide bonds with broad specificity.. Allosterically activated by HslU binding. Protease subunit of a proteasome-like degradation complex believed to be a general protein degrading machinery. The protein is ATP-dependent protease subunit HslV of Pectobacterium atrosepticum (strain SCRI 1043 / ATCC BAA-672) (Erwinia carotovora subsp. atroseptica).